Here is a 321-residue protein sequence, read N- to C-terminus: Lipoyl synthase (321 aa).

Positions 68, 73, 79, 94, 98, 101, and 308 each coordinate [4Fe-4S] cluster. Residues 80 to 297 (FNHGTATFMI…KEVALELGFT (218 aa)) form the Radical SAM core domain.

It belongs to the radical SAM superfamily. Lipoyl synthase family. Requires [4Fe-4S] cluster as cofactor.

Its subcellular location is the cytoplasm. It catalyses the reaction [[Fe-S] cluster scaffold protein carrying a second [4Fe-4S](2+) cluster] + N(6)-octanoyl-L-lysyl-[protein] + 2 oxidized [2Fe-2S]-[ferredoxin] + 2 S-adenosyl-L-methionine + 4 H(+) = [[Fe-S] cluster scaffold protein] + N(6)-[(R)-dihydrolipoyl]-L-lysyl-[protein] + 4 Fe(3+) + 2 hydrogen sulfide + 2 5'-deoxyadenosine + 2 L-methionine + 2 reduced [2Fe-2S]-[ferredoxin]. It participates in protein modification; protein lipoylation via endogenous pathway; protein N(6)-(lipoyl)lysine from octanoyl-[acyl-carrier-protein]: step 2/2. Its function is as follows. Catalyzes the radical-mediated insertion of two sulfur atoms into the C-6 and C-8 positions of the octanoyl moiety bound to the lipoyl domains of lipoate-dependent enzymes, thereby converting the octanoylated domains into lipoylated derivatives. In Vibrio parahaemolyticus serotype O3:K6 (strain RIMD 2210633), this protein is Lipoyl synthase.